Consider the following 259-residue polypeptide: Ribosomal RNA small subunit methyltransferase A (259 aa).

Asn-15, Leu-17, Gly-41, Glu-62, Asp-86, and Asn-105 together coordinate S-adenosyl-L-methionine.

This sequence belongs to the class I-like SAM-binding methyltransferase superfamily. rRNA adenine N(6)-methyltransferase family. RsmA subfamily.

Its subcellular location is the cytoplasm. The enzyme catalyses adenosine(1518)/adenosine(1519) in 16S rRNA + 4 S-adenosyl-L-methionine = N(6)-dimethyladenosine(1518)/N(6)-dimethyladenosine(1519) in 16S rRNA + 4 S-adenosyl-L-homocysteine + 4 H(+). Specifically dimethylates two adjacent adenosines (A1518 and A1519) in the loop of a conserved hairpin near the 3'-end of 16S rRNA in the 30S particle. May play a critical role in biogenesis of 30S subunits. This is Ribosomal RNA small subunit methyltransferase A from Mycoplasmopsis synoviae (strain 53) (Mycoplasma synoviae).